The sequence spans 201 residues: Aminoglycoside N(6')-acetyltransferase type 1 (201 aa).

One can recognise an N-acetyltransferase domain in the interval valine 25–glutamine 192. Residues tryptophan 51 and aspartate 154 each contribute to the substrate site. Asparagine 159 lines the acetyl-CoA pocket.

In terms of assembly, homodimer.

It catalyses the reaction kanamycin B + acetyl-CoA = N(6')-acetylkanamycin B + CoA + H(+). Functionally, catalyzes the transfer of an acetyl group from acetyl-CoA to the 6'-amino group of aminoglycoside molecules conferring resistance to antibiotics containing the purpurosamine ring including amikacin and kanamycin. The polypeptide is Aminoglycoside N(6')-acetyltransferase type 1 (aacA4) (Serratia marcescens).